The chain runs to 346 residues: D-fructose 1,6-bisphosphatase class 2/sedoheptulose 1,7-bisphosphatase 1 (346 aa).

4 residues coordinate Mn(2+): aspartate 33, glutamate 57, aspartate 97, and glutamate 100. Residues 100–102 (EGT), tyrosine 131, 176–178 (RAR), and 198–200 (DGD) contribute to the substrate site. Mn(2+) is bound at residue glutamate 225.

The protein belongs to the FBPase class 2 family. As to quaternary structure, homotetramer. Requires Mn(2+) as cofactor.

It carries out the reaction beta-D-fructose 1,6-bisphosphate + H2O = beta-D-fructose 6-phosphate + phosphate. The enzyme catalyses D-sedoheptulose 1,7-bisphosphate + H2O = D-sedoheptulose 7-phosphate + phosphate. It functions in the pathway carbohydrate biosynthesis; Calvin cycle. Catalyzes the hydrolysis of fructose 1,6-bisphosphate (Fru 1,6-P2) and sedoheptulose 1,7-bisphosphate (Sed 1,7-P2) to fructose 6-phosphate and sedoheptulose 7-phosphate, respectively. This is D-fructose 1,6-bisphosphatase class 2/sedoheptulose 1,7-bisphosphatase 1 from Acaryochloris marina (strain MBIC 11017).